We begin with the raw amino-acid sequence, 306 residues long: Curved DNA-binding protein (306 aa).

The J domain occupies 5 to 69; it reads DYYAIMGVKP…QRRAEYDQLW (65 aa).

It localises to the cytoplasm. The protein resides in the nucleoid. Functionally, DNA-binding protein that preferentially recognizes a curved DNA sequence. It is probably a functional analog of DnaJ; displays overlapping activities with DnaJ, but functions under different conditions, probably acting as a molecular chaperone in an adaptive response to environmental stresses other than heat shock. Lacks autonomous chaperone activity; binds native substrates and targets them for recognition by DnaK. Its activity is inhibited by the binding of CbpM. This is Curved DNA-binding protein from Salmonella choleraesuis (strain SC-B67).